Reading from the N-terminus, the 74-residue chain is Large ribosomal subunit protein uL29 (74 aa).

Belongs to the universal ribosomal protein uL29 family.

The protein is Large ribosomal subunit protein uL29 of Nostoc sp. (strain PCC 7120 / SAG 25.82 / UTEX 2576).